Reading from the N-terminus, the 194-residue chain is Large ribosomal subunit protein bL9 (194 aa).

Residues 166-184 (AENQAQADEQAGELAAAAA) are compositionally biased toward low complexity. The disordered stretch occupies residues 166–194 (AENQAQADEQAGELAAAAAERGDMGGDEE). Positions 185–194 (ERGDMGGDEE) are enriched in basic and acidic residues.

The protein belongs to the bacterial ribosomal protein bL9 family.

Functionally, binds to the 23S rRNA. This is Large ribosomal subunit protein bL9 from Hyphomonas neptunium (strain ATCC 15444).